Reading from the N-terminus, the 342-residue chain is Ribosomal RNA small subunit methyltransferase C (342 aa).

It belongs to the methyltransferase superfamily. RsmC family. Monomer.

The protein localises to the cytoplasm. The enzyme catalyses guanosine(1207) in 16S rRNA + S-adenosyl-L-methionine = N(2)-methylguanosine(1207) in 16S rRNA + S-adenosyl-L-homocysteine + H(+). Functionally, specifically methylates the guanine in position 1207 of 16S rRNA in the 30S particle. The sequence is that of Ribosomal RNA small subunit methyltransferase C from Salmonella heidelberg (strain SL476).